The primary structure comprises 311 residues: DNA replication terminus site-binding protein (311 aa).

Belongs to the Tus family.

It is found in the cytoplasm. Its function is as follows. Trans-acting protein required for termination of DNA replication. Binds to DNA replication terminator sequences (terA to terF) to prevent the passage of replication forks. The termination efficiency will be affected by the affinity of this protein for the terminator sequence. This chain is DNA replication terminus site-binding protein, found in Yersinia pestis.